We begin with the raw amino-acid sequence, 185 residues long: Ribosome-recycling factor (185 aa).

It belongs to the RRF family.

It localises to the cytoplasm. Functionally, responsible for the release of ribosomes from messenger RNA at the termination of protein biosynthesis. May increase the efficiency of translation by recycling ribosomes from one round of translation to another. This Buchnera aphidicola subsp. Acyrthosiphon pisum (strain 5A) protein is Ribosome-recycling factor.